The primary structure comprises 518 residues: Phytoene desaturase (neurosporene-forming) (518 aa).

FAD is bound at residue 14–47 (LVIGSGLGGLAAAMRLGAKGWRVTVIDKLDVPGG).

It belongs to the carotenoid/retinoid oxidoreductase family. FAD is required as a cofactor.

The enzyme catalyses 15-cis-phytoene + 3 A = all-trans-neurosporene + 3 AH2. Its pathway is carotenoid biosynthesis. In terms of biological role, converts phytoene into all-trans-neurosporene as the major product, via the intermediary of phytofluene and zeta-carotene, by the introduction of three double bonds. This chain is Phytoene desaturase (neurosporene-forming) (crtI), found in Cereibacter sphaeroides (strain ATCC 17023 / DSM 158 / JCM 6121 / CCUG 31486 / LMG 2827 / NBRC 12203 / NCIMB 8253 / ATH 2.4.1.) (Rhodobacter sphaeroides).